The primary structure comprises 304 residues: Putative dihydroorotate dehydrogenase A (fumarate) (304 aa).

Residues serine 21 and 45-46 each bind FMN; that span reads KS. Substrate-binding positions include lysine 45, 69–73, and asparagine 129; that span reads NAVGL. Asparagine 129 serves as a coordination point for FMN. Cysteine 132 (nucleophile) is an active-site residue. Residues lysine 168 and isoleucine 194 each coordinate FMN. Position 195–196 (195–196) interacts with substrate; the sequence is NT. FMN contacts are provided by residues glycine 220, 246 to 247, and 268 to 269; these read GG and GS.

It belongs to the dihydroorotate dehydrogenase family. Type 1 subfamily. Homodimer. It depends on FMN as a cofactor.

The protein localises to the cytoplasm. It catalyses the reaction (S)-dihydroorotate + fumarate = orotate + succinate. Its pathway is pyrimidine metabolism; UMP biosynthesis via de novo pathway. Functionally, catalyzes the conversion of dihydroorotate to orotate with fumarate as the electron acceptor. This chain is Putative dihydroorotate dehydrogenase A (fumarate) (pyrD), found in Pediococcus pentosaceus (strain ATCC 25745 / CCUG 21536 / LMG 10740 / 183-1w).